Here is a 165-residue protein sequence, read N- to C-terminus: Large ribosomal subunit protein uL10 (165 aa).

This sequence belongs to the universal ribosomal protein uL10 family. In terms of assembly, part of the ribosomal stalk of the 50S ribosomal subunit. The N-terminus interacts with L11 and the large rRNA to form the base of the stalk. The C-terminus forms an elongated spine to which L12 dimers bind in a sequential fashion forming a multimeric L10(L12)X complex.

In terms of biological role, forms part of the ribosomal stalk, playing a central role in the interaction of the ribosome with GTP-bound translation factors. The protein is Large ribosomal subunit protein uL10 of Buchnera aphidicola subsp. Acyrthosiphon pisum (strain 5A).